The primary structure comprises 607 residues: 1-deoxy-D-xylulose-5-phosphate synthase (607 aa).

Residues histidine 63 and 104–106 (GHS) contribute to the thiamine diphosphate site. Aspartate 135 provides a ligand contact to Mg(2+). Thiamine diphosphate-binding positions include 136-137 (GA), asparagine 164, tyrosine 271, and glutamate 351. Residue asparagine 164 coordinates Mg(2+).

The protein belongs to the transketolase family. DXPS subfamily. In terms of assembly, homodimer. Requires Mg(2+) as cofactor. The cofactor is thiamine diphosphate.

The catalysed reaction is D-glyceraldehyde 3-phosphate + pyruvate + H(+) = 1-deoxy-D-xylulose 5-phosphate + CO2. It functions in the pathway metabolic intermediate biosynthesis; 1-deoxy-D-xylulose 5-phosphate biosynthesis; 1-deoxy-D-xylulose 5-phosphate from D-glyceraldehyde 3-phosphate and pyruvate: step 1/1. In terms of biological role, catalyzes the acyloin condensation reaction between C atoms 2 and 3 of pyruvate and glyceraldehyde 3-phosphate to yield 1-deoxy-D-xylulose-5-phosphate (DXP). This is 1-deoxy-D-xylulose-5-phosphate synthase from Campylobacter hominis (strain ATCC BAA-381 / DSM 21671 / CCUG 45161 / LMG 19568 / NCTC 13146 / CH001A).